The primary structure comprises 792 residues: Probable exo-1,4-beta-xylosidase xlnD (792 aa).

A signal peptide spans 1–20; the sequence is MSVAKSIAAVLVALLPGALA. N23, N87, N118, N142, and N246 each carry an N-linked (GlcNAc...) asparagine glycan. The active site involves D310. Residues N326, N385, N404, N440, N477, N518, N679, and N701 are each glycosylated (N-linked (GlcNAc...) asparagine).

This sequence belongs to the glycosyl hydrolase 3 family.

The protein resides in the secreted. The enzyme catalyses Hydrolysis of (1-&gt;4)-beta-D-xylans, to remove successive D-xylose residues from the non-reducing termini.. The protein operates within glycan degradation; xylan degradation. Its function is as follows. Xylan 1,4-beta-xylosidase involved in the hydrolysis of xylan, a major structural heterogeneous polysaccharide found in plant biomass representing the second most abundant polysaccharide in the biosphere, after cellulose. The polypeptide is Probable exo-1,4-beta-xylosidase xlnD (xlnD) (Aspergillus fumigatus (strain CBS 144.89 / FGSC A1163 / CEA10) (Neosartorya fumigata)).